Here is a 622-residue protein sequence, read N- to C-terminus: FERM domain-containing protein 6 (622 aa).

The FERM domain maps to 16 to 328; sequence RSVCIFLPND…NSHRLYMNLQ (313 aa). Residues 364 to 445 are disordered; sequence KRSRASGSSA…SGVESGGKDR (82 aa). 2 stretches are compositionally biased toward low complexity: residues 384–395 and 425–438; these read HSTASHSSSHTS and SSMTSHGSSHTSGV. S522 carries the post-translational modification Phosphoserine. At T523 the chain carries Phosphothreonine. Residues S525, S542, and S544 each carry the phosphoserine modification.

It is found in the cytoplasm. The protein resides in the cell membrane. The polypeptide is FERM domain-containing protein 6 (FRMD6) (Homo sapiens (Human)).